Reading from the N-terminus, the 203-residue chain is Small ribosomal subunit protein uS4 (203 aa).

Residues 93-156 (QRLDNVVYRL…MKVPAILEAV (64 aa)) enclose the S4 RNA-binding domain.

It belongs to the universal ribosomal protein uS4 family. Part of the 30S ribosomal subunit. Contacts protein S5. The interaction surface between S4 and S5 is involved in control of translational fidelity.

Its function is as follows. One of the primary rRNA binding proteins, it binds directly to 16S rRNA where it nucleates assembly of the body of the 30S subunit. In terms of biological role, with S5 and S12 plays an important role in translational accuracy. This is Small ribosomal subunit protein uS4 from Lactococcus lactis subsp. cremoris (strain MG1363).